The following is a 328-amino-acid chain: Naphthalene 1,2-dioxygenase system ferredoxin--NAD(P)(+), reductase component (328 aa).

The 89-residue stretch at 1-89 folds into the 2Fe-2S ferredoxin-type domain; sequence MELLIQPNNR…NCAIEVPEAD (89 aa). [2Fe-2S] cluster-binding residues include C35, C40, C43, and C73. One can recognise an FAD-binding FR-type domain in the interval 96–193; that stretch reads ARIIKGTVVA…SGPLGTAYLR (98 aa).

The protein belongs to the bacterial ring-hydroxylating dioxygenase ferredoxin reductase component family. As to quaternary structure, the naphthalene dioxygenase (NDO) multicomponent enzyme system is composed of an electron transfer component and a dioxygenase component (iron sulfur protein (ISP)). The electron transfer component is composed of a ferredoxin reductase (NdoR) and a ferredoxin (NdoA), and the dioxygenase component is formed of a heterohexamer (trimer of heterodimers) of three large alpha subunits (NdoB) and three small beta subunits (NdoC). It depends on [2Fe-2S] cluster as a cofactor. Requires FAD as cofactor.

It catalyses the reaction 2 reduced [2Fe-2S]-[ferredoxin] + NAD(+) + H(+) = 2 oxidized [2Fe-2S]-[ferredoxin] + NADH. The enzyme catalyses 2 reduced [2Fe-2S]-[ferredoxin] + NADP(+) + H(+) = 2 oxidized [2Fe-2S]-[ferredoxin] + NADPH. It participates in aromatic compound metabolism; naphthalene degradation. Strongly inhibited by p-chloromercuribenzoate. Also inhibited by N-ethylmaleimide and o-phenanthroline. Component of the naphthalene dioxygenase (NDO) multicomponent enzyme system which catalyzes the incorporation of both atoms of molecular oxygen into naphthalene to form cis-(1R,2S)-dihydroxy-1,2-dihydronaphthalene. Ferredoxin reductase catalyzes the transfer of electrons from NADH to ferredoxin (NdoA). NADPH is also effective but yields only 39% of the activity obtained with NADH. Also able to catalyze the cis-dihydroxylation of biphenyl and phenanthrene. The protein is Naphthalene 1,2-dioxygenase system ferredoxin--NAD(P)(+), reductase component (ndoR) of Pseudomonas putida (Arthrobacter siderocapsulatus).